The chain runs to 615 residues: ABC transporter G family member 22 (615 aa).

Residues 31-279 enclose the ABC transporter domain; it reads ITFKDLAYSV…EIGFPFPDQT (249 aa). 67–74 serves as a coordination point for ATP; the sequence is GPSGSGKT. The 247-residue stretch at 364 to 610 folds into the ABC transmembrane type-2 domain; it reads SNCLVRFAVA…TMVFLCLHYF (247 aa). 6 helical membrane passes run 370-390, 400-420, 442-462, 477-497, 508-528, and 587-607; these read FAVAVFVGLLFGACFSGLGMD, VLFYLVINMILQPFASISLFI, LALMFFEILACIGTAFILGTI, FFAMAILTLAHLAGDFFMLII, FAVGAGVATIYQLFAGFFVPI, and INLIIVSSFAFAFFTMVFLCL.

The protein belongs to the ABC transporter superfamily. ABCG family. Eye pigment precursor importer (TC 3.A.1.204) subfamily.

It is found in the membrane. Functionally, may be involved in cell migration. The protein is ABC transporter G family member 22 (abcG22) of Dictyostelium discoideum (Social amoeba).